The chain runs to 379 residues: UDP-N-acetylglucosamine--N-acetylmuramyl-(pentapeptide) pyrophosphoryl-undecaprenol N-acetylglucosamine transferase (379 aa).

Residues 10 to 12 (TGG), asparagine 124, and arginine 165 each bind UDP-N-acetyl-alpha-D-glucosamine. A disordered region spans residues 174-195 (TRDQGPGIRDQEKHMTDSTGPA). 3 residues coordinate UDP-N-acetyl-alpha-D-glucosamine: serine 211, isoleucine 266, and glutamine 311.

The protein belongs to the glycosyltransferase 28 family. MurG subfamily.

It localises to the cell inner membrane. The enzyme catalyses di-trans,octa-cis-undecaprenyl diphospho-N-acetyl-alpha-D-muramoyl-L-alanyl-D-glutamyl-meso-2,6-diaminopimeloyl-D-alanyl-D-alanine + UDP-N-acetyl-alpha-D-glucosamine = di-trans,octa-cis-undecaprenyl diphospho-[N-acetyl-alpha-D-glucosaminyl-(1-&gt;4)]-N-acetyl-alpha-D-muramoyl-L-alanyl-D-glutamyl-meso-2,6-diaminopimeloyl-D-alanyl-D-alanine + UDP + H(+). It participates in cell wall biogenesis; peptidoglycan biosynthesis. Its function is as follows. Cell wall formation. Catalyzes the transfer of a GlcNAc subunit on undecaprenyl-pyrophosphoryl-MurNAc-pentapeptide (lipid intermediate I) to form undecaprenyl-pyrophosphoryl-MurNAc-(pentapeptide)GlcNAc (lipid intermediate II). This Pelobacter propionicus (strain DSM 2379 / NBRC 103807 / OttBd1) protein is UDP-N-acetylglucosamine--N-acetylmuramyl-(pentapeptide) pyrophosphoryl-undecaprenol N-acetylglucosamine transferase.